Here is a 450-residue protein sequence, read N- to C-terminus: Phosphoglucosamine mutase (450 aa).

Catalysis depends on Ser101, which acts as the Phosphoserine intermediate. The Mg(2+) site is built by Ser101, Asp242, Asp244, and Asp246. Phosphoserine is present on Ser101.

It belongs to the phosphohexose mutase family. Mg(2+) serves as cofactor. Activated by phosphorylation.

The catalysed reaction is alpha-D-glucosamine 1-phosphate = D-glucosamine 6-phosphate. In terms of biological role, catalyzes the conversion of glucosamine-6-phosphate to glucosamine-1-phosphate. This chain is Phosphoglucosamine mutase, found in Rhodopseudomonas palustris (strain HaA2).